Reading from the N-terminus, the 209-residue chain is Large ribosomal subunit protein uL3 (209 aa).

Gln150 carries the N5-methylglutamine modification.

This sequence belongs to the universal ribosomal protein uL3 family. As to quaternary structure, part of the 50S ribosomal subunit. Forms a cluster with proteins L14 and L19. In terms of processing, methylated by PrmB.

Functionally, one of the primary rRNA binding proteins, it binds directly near the 3'-end of the 23S rRNA, where it nucleates assembly of the 50S subunit. This chain is Large ribosomal subunit protein uL3, found in Aliivibrio fischeri (strain MJ11) (Vibrio fischeri).